An 84-amino-acid polypeptide reads, in one-letter code: Anaphase-promoting complex subunit 11 (84 aa).

12 residues coordinate Zn(2+): cysteine 23, cysteine 26, cysteine 34, cysteine 37, cysteine 44, cysteine 51, histidine 53, histidine 56, histidine 58, cysteine 59, cysteine 73, and cysteine 76. The segment at 34-77 (CPDCKVPGDDCPLVWGQCSHCFHMHCILKWLNAQQVQQHCPMCR) adopts an RING-type zinc-finger fold.

It belongs to the RING-box family. The mammalian APC/C is composed at least of 14 distinct subunits ANAPC1, ANAPC2, CDC27/APC3, ANAPC4, ANAPC5, CDC16/APC6, ANAPC7, CDC23/APC8, ANAPC10, ANAPC11, CDC26/APC12, ANAPC13, ANAPC15 and ANAPC16 that assemble into a complex of at least 19 chains with a combined molecular mass of around 1.2 MDa; APC/C interacts with FZR1 and FBXO5. Interacts with the cullin domain of ANAPC2. Interacts with UBE2D2. Post-translationally, auto-ubiquitinated.

It localises to the cytoplasm. The protein resides in the nucleus. It functions in the pathway protein modification; protein ubiquitination. Its function is as follows. Together with the cullin protein ANAPC2, constitutes the catalytic component of the anaphase promoting complex/cyclosome (APC/C), a cell cycle-regulated E3 ubiquitin ligase that controls progression through mitosis and the G1 phase of the cell cycle. The APC/C complex acts by mediating ubiquitination and subsequent degradation of target proteins: it mainly mediates the formation of 'Lys-11'-linked polyubiquitin chains and, to a lower extent, the formation of 'Lys-48'- and 'Lys-63'-linked polyubiquitin chains. The APC/C complex catalyzes assembly of branched 'Lys-11'-/'Lys-48'-linked branched ubiquitin chains on target proteins. May recruit the E2 ubiquitin-conjugating enzymes to the complex. The protein is Anaphase-promoting complex subunit 11 (Anapc11) of Mus musculus (Mouse).